Reading from the N-terminus, the 201-residue chain is Recombination protein RecR (201 aa).

The segment at 60–75 (CSRCGNVDTVDPCTVC) adopts a C4-type zinc-finger fold. A Toprim domain is found at 83-178 (SVIIVVEDVS…KITRLAHGVP (96 aa)).

The protein belongs to the RecR family.

Functionally, may play a role in DNA repair. It seems to be involved in an RecBC-independent recombinational process of DNA repair. It may act with RecF and RecO. The polypeptide is Recombination protein RecR (Rhizobium etli (strain CIAT 652)).